A 309-amino-acid chain; its full sequence is Ankyrin repeat and SOCS box protein 12 (309 aa).

ANK repeat units follow at residues 63 to 92 (VPGT…DVDS), 96 to 125 (KAQT…SPGG), 129 to 158 (NNCS…EANV), 171 to 200 (SCSG…DPDY), and 213 to 243 (RPRT…NIYL). Positions 268-308 (PRSLLSQVRLVVRRALCQAGQPQAINQLDIPPMLISYLKHQ) constitute an SOCS box domain.

It belongs to the ankyrin SOCS box (ASB) family. Interacts with CUL5 and RNF7.

The protein operates within protein modification; protein ubiquitination. Probable substrate-recognition component of a SCF-like ECS (Elongin-Cullin-SOCS-box protein) E3 ubiquitin-protein ligase complex which mediates the ubiquitination and subsequent proteasomal degradation of target proteins. This is Ankyrin repeat and SOCS box protein 12 (ASB12) from Homo sapiens (Human).